The sequence spans 487 residues: N-succinylglutamate 5-semialdehyde dehydrogenase (487 aa).

An NAD(+)-binding site is contributed by glycine 221–glycine 226. Active-site residues include glutamate 244 and cysteine 278.

This sequence belongs to the aldehyde dehydrogenase family. AstD subfamily.

It carries out the reaction N-succinyl-L-glutamate 5-semialdehyde + NAD(+) + H2O = N-succinyl-L-glutamate + NADH + 2 H(+). Its pathway is amino-acid degradation; L-arginine degradation via AST pathway; L-glutamate and succinate from L-arginine: step 4/5. In terms of biological role, catalyzes the NAD-dependent reduction of succinylglutamate semialdehyde into succinylglutamate. The chain is N-succinylglutamate 5-semialdehyde dehydrogenase from Burkholderia orbicola (strain MC0-3).